Consider the following 612-residue polypeptide: 1,8-cineole synthase, chloroplastic (612 aa).

The N-terminal 52 residues, 1 to 52 (MALVSGAPLASRSCLNKSLISSTHELKPLRRTILPTLRWKSATPSINMCLTT), are a transit peptide targeting the chloroplast. Residues D363, D367, and D515 each contribute to the Mg(2+) site. Positions 363–367 (DDIYD) match the DDXXD motif motif.

This sequence belongs to the terpene synthase family. Tpsd subfamily. Requires Mg(2+) as cofactor. It depends on Mn(2+) as a cofactor.

Its subcellular location is the plastid. The protein resides in the chloroplast. It carries out the reaction (2E)-geranyl diphosphate + H2O = 1,8-cineole + diphosphate. The protein operates within terpene metabolism; oleoresin biosynthesis. Functionally, terpene synthase (TPS) involved in the biosynthesis of monoterpene natural products included in conifer oleoresin secretions and volatile emissions; these compounds contribute to biotic and abiotic stress defense against herbivores and pathogens. Catalyzes the conversion of (2E)-geranyl diphosphate (GPP) to 1,8-cineole. This is 1,8-cineole synthase, chloroplastic from Picea engelmannii x Picea glauca (Hybrid white spruce).